The primary structure comprises 368 residues: Tetraacyldisaccharide 4'-kinase (368 aa).

Residue 66–73 participates in ATP binding; the sequence is TVGGTGKT.

It belongs to the LpxK family.

It catalyses the reaction a lipid A disaccharide + ATP = a lipid IVA + ADP + H(+). Its pathway is glycolipid biosynthesis; lipid IV(A) biosynthesis; lipid IV(A) from (3R)-3-hydroxytetradecanoyl-[acyl-carrier-protein] and UDP-N-acetyl-alpha-D-glucosamine: step 6/6. In terms of biological role, transfers the gamma-phosphate of ATP to the 4'-position of a tetraacyldisaccharide 1-phosphate intermediate (termed DS-1-P) to form tetraacyldisaccharide 1,4'-bis-phosphate (lipid IVA). In Desulfatibacillum aliphaticivorans, this protein is Tetraacyldisaccharide 4'-kinase.